The chain runs to 144 residues: 3-dehydroquinate dehydratase (144 aa).

The Proton acceptor role is filled by Tyr-22. Substrate is bound by residues Asn-73, His-79, and Asp-86. The Proton donor role is filled by His-99. Substrate contacts are provided by residues 100 to 101 and Arg-110; that span reads LS.

Belongs to the type-II 3-dehydroquinase family. Homododecamer.

It catalyses the reaction 3-dehydroquinate = 3-dehydroshikimate + H2O. It participates in metabolic intermediate biosynthesis; chorismate biosynthesis; chorismate from D-erythrose 4-phosphate and phosphoenolpyruvate: step 3/7. Catalyzes a trans-dehydration via an enolate intermediate. This is 3-dehydroquinate dehydratase from Pelotomaculum thermopropionicum (strain DSM 13744 / JCM 10971 / SI).